The chain runs to 360 residues: Complement control protein homolog (360 aa).

The first 20 residues, 1–20 (MYTLHYICLVLSCVIYFVWT), serve as a signal peptide directing secretion. 4 consecutive Sushi domains span residues 21 to 81 (LSCP…KCQK), 82 to 144 (KKCS…ICDI), 145 to 207 (KKCK…KCEF), and 208 to 266 (IFCK…ECMK). 8 disulfides stabilise this stretch: Cys23/Cys68, Cys54/Cys79, Cys84/Cys125, Cys111/Cys142, Cys147/Cys191, Cys175/Cys205, Cys210/Cys252, and Cys238/Cys264. N-linked (GlcNAc...) asparagine; by host glycosylation is found at Asn36, Asn39, Asn46, and Asn72. A glycan (N-linked (GlcNAc...) asparagine; by host) is linked at Asn155. N-linked (GlcNAc...) asparagine; by host glycosylation occurs at Asn294. Residues 328–350 (GVLVIILTTSFIIIGIILTGVCL) traverse the membrane as a helical segment.

The protein belongs to the receptors of complement activation (RCA) family.

It is found in the membrane. Its subcellular location is the secreted. The protein is Complement control protein homolog (4) of Saimiriine herpesvirus 2 (strain 11) (SaHV-2).